Reading from the N-terminus, the 1049-residue chain is Isoleucine--tRNA ligase (1049 aa).

The 'HIGH' region motif lies at 48-58 (PYTTGRIHLGT). The 'KMSKS' region motif lies at 596-600 (KMSKS). An ATP-binding site is contributed by K599.

This sequence belongs to the class-I aminoacyl-tRNA synthetase family. IleS type 2 subfamily. As to quaternary structure, monomer. Requires Zn(2+) as cofactor.

The protein resides in the cytoplasm. The enzyme catalyses tRNA(Ile) + L-isoleucine + ATP = L-isoleucyl-tRNA(Ile) + AMP + diphosphate. Its function is as follows. Catalyzes the attachment of isoleucine to tRNA(Ile). As IleRS can inadvertently accommodate and process structurally similar amino acids such as valine, to avoid such errors it has two additional distinct tRNA(Ile)-dependent editing activities. One activity is designated as 'pretransfer' editing and involves the hydrolysis of activated Val-AMP. The other activity is designated 'posttransfer' editing and involves deacylation of mischarged Val-tRNA(Ile). This is Isoleucine--tRNA ligase from Methanothrix thermoacetophila (strain DSM 6194 / JCM 14653 / NBRC 101360 / PT) (Methanosaeta thermophila).